We begin with the raw amino-acid sequence, 220 residues long: 1-Cys peroxiredoxin B (220 aa).

In terms of domain architecture, Thioredoxin spans 4–165 (LTLGDVVPDL…VLRATDALLT (162 aa)). The active-site Cysteine sulfenic acid (-SOH) intermediate is Cys-46. The Bipartite nuclear localization signal motif lies at 195–218 (KARFPAGFETAQLPSNKCYLRFTQ).

It belongs to the peroxiredoxin family. Prx6 subfamily.

The protein resides in the nucleus. It localises to the cytoplasm. It carries out the reaction a hydroperoxide + [thioredoxin]-dithiol = an alcohol + [thioredoxin]-disulfide + H2O. Functionally, thiol-specific peroxidase that catalyzes the reduction of hydrogen peroxide and organic hydroperoxides to water and alcohols, respectively. Seems to contribute to the inhibition of germination during stress. The chain is 1-Cys peroxiredoxin B from Oryza sativa subsp. japonica (Rice).